Here is a 351-residue protein sequence, read N- to C-terminus: MAVSSEQHELSHFKRTQTKKEKFNCSEYGNRSCPENERSLGVRVAMYSFMAGSIFITIFGNLAMIISISYFKQLHTPTNFLILSMAITDFLLGFTIMPYSMIRSVENCWYFGLTFCKIYYSFDLMLSITSIFHLCSVAIDRFYAICYPLLYSTKITIPVIKRLLLLCWSVPGAFAFGVVFSEAYADGIEGYDILVACSSSCPVMFNKLWGTTLFMAGFFTPGSMMVGIYGKIFAVSRKHAHAINNLRENQNNQVKKDKKAAKTLGIVIGVFLLCWFPCFFTILLDPFLNFSTPVVLFDALTWFGYFNSTCNPLIYGFFYPWFRRALKYILLGKIFSSCFHNTILCMQKESE.

At 1 to 48 the chain is on the extracellular side; the sequence is MAVSSEQHELSHFKRTQTKKEKFNCSEYGNRSCPENERSLGVRVAMYS. 2 N-linked (GlcNAc...) asparagine glycosylation sites follow: asparagine 24 and asparagine 30. 2 disulfides stabilise this stretch: cysteine 33/cysteine 197 and cysteine 116/cysteine 201. A helical membrane pass occupies residues 49–69; the sequence is FMAGSIFITIFGNLAMIISIS. At 70–79 the chain is on the cytoplasmic side; sequence YFKQLHTPTN. A helical membrane pass occupies residues 80–100; sequence FLILSMAITDFLLGFTIMPYS. The Extracellular portion of the chain corresponds to 101 to 118; that stretch reads MIRSVENCWYFGLTFCKI. The chain crosses the membrane as a helical span at residues 119–139; the sequence is YYSFDLMLSITSIFHLCSVAI. The Cytoplasmic portion of the chain corresponds to 140–162; sequence DRFYAICYPLLYSTKITIPVIKR. The helical transmembrane segment at 163 to 183 threads the bilayer; it reads LLLLCWSVPGAFAFGVVFSEA. The Extracellular portion of the chain corresponds to 184-207; that stretch reads YADGIEGYDILVACSSSCPVMFNK. A helical transmembrane segment spans residues 208–228; it reads LWGTTLFMAGFFTPGSMMVGI. Over 229–263 the chain is Cytoplasmic; the sequence is YGKIFAVSRKHAHAINNLRENQNNQVKKDKKAAKT. The helical transmembrane segment at 264 to 284 threads the bilayer; the sequence is LGIVIGVFLLCWFPCFFTILL. Residues 285-299 lie on the Extracellular side of the membrane; that stretch reads DPFLNFSTPVVLFDA. A glycan (N-linked (GlcNAc...) asparagine) is linked at asparagine 289. Residues 300–322 form a helical membrane-spanning segment; sequence LTWFGYFNSTCNPLIYGFFYPWF. At 323 to 351 the chain is on the cytoplasmic side; the sequence is RRALKYILLGKIFSSCFHNTILCMQKESE.

It belongs to the G-protein coupled receptor 1 family. In terms of tissue distribution, not expressed in the pons, thalamus, hypothalamus, hippocampus, caudate, putamen, frontal cortex, basal forebrain, midbrain or liver.

The protein resides in the cell membrane. In terms of biological role, orphan olfactory receptor specific for trace amines. Trace amine compounds are enriched in animal body fluids and act on trace amine-associated receptors (TAARs) to elicit both intraspecific and interspecific innate behaviors. Ligand-binding causes a conformation change that triggers signaling via the G(s)-class of G-proteins which activate adenylate cyclase. The chain is Trace amine-associated receptor 2 from Homo sapiens (Human).